The chain runs to 297 residues: MEDRYGRQIRSFRLSITPKCNLKCFYCHKEGRNEEHGKLMSADEIGKIVNSSLEFGVRKIKISGGEPLLRTDLPEIISYIKNEQIKDISLTTNGILLEKYAQKLKDAGLDRVNVSLDTLDPVQYKKITAGGNIESVKKGIEKAIEVGLTPLKVNFLAMDCTVNQLPAIMDYCRKIGAILQIIEFIPMEPELKHHHVDVVPIEEEIAKNADNVFTRKFMQNRKKYVIDGLEVEFVRPMDNTEFCNHCTRIRLTYDGYLKPCLLRDDNLVDVANPLRNGEDIRKYFIKCIHEREPFCKP.

The Radical SAM core domain maps to 4-227 (RYGRQIRSFR…MQNRKKYVID (224 aa)). Arg13 provides a ligand contact to GTP. The [4Fe-4S] cluster site is built by Cys20 and Cys24. Residue Tyr26 coordinates S-adenosyl-L-methionine. [4Fe-4S] cluster is bound at residue Cys27. Lys61 provides a ligand contact to GTP. Gly65 is a binding site for S-adenosyl-L-methionine. Residue Thr91 coordinates GTP. Residue Ser115 coordinates S-adenosyl-L-methionine. A GTP-binding site is contributed by Lys152. Residues Cys243 and Cys246 each contribute to the [4Fe-4S] cluster site. Residue 248–250 (RIR) coordinates GTP. Residue Cys260 coordinates [4Fe-4S] cluster.

The protein belongs to the radical SAM superfamily. MoaA family. Requires [4Fe-4S] cluster as cofactor.

The catalysed reaction is GTP + AH2 + S-adenosyl-L-methionine = (8S)-3',8-cyclo-7,8-dihydroguanosine 5'-triphosphate + 5'-deoxyadenosine + L-methionine + A + H(+). Its pathway is cofactor biosynthesis; molybdopterin biosynthesis. Catalyzes the cyclization of GTP to (8S)-3',8-cyclo-7,8-dihydroguanosine 5'-triphosphate. This chain is Probable GTP 3',8-cyclase, found in Methanococcus maripaludis (strain DSM 14266 / JCM 13030 / NBRC 101832 / S2 / LL).